The primary structure comprises 642 residues: Threonine--tRNA ligase (642 aa).

The region spanning 1-61 (MPVITLPDGS…ETDSDLSIIT (61 aa)) is the TGS domain. Residues 243–534 (DHRKIGKQLD…LIEEYAGKFP (292 aa)) are catalytic. Zn(2+) is bound by residues cysteine 334, histidine 385, and histidine 511.

It belongs to the class-II aminoacyl-tRNA synthetase family. As to quaternary structure, homodimer. Zn(2+) serves as cofactor.

It localises to the cytoplasm. The enzyme catalyses tRNA(Thr) + L-threonine + ATP = L-threonyl-tRNA(Thr) + AMP + diphosphate + H(+). Functionally, catalyzes the attachment of threonine to tRNA(Thr) in a two-step reaction: L-threonine is first activated by ATP to form Thr-AMP and then transferred to the acceptor end of tRNA(Thr). Also edits incorrectly charged L-seryl-tRNA(Thr). The sequence is that of Threonine--tRNA ligase from Shewanella pealeana (strain ATCC 700345 / ANG-SQ1).